The chain runs to 345 residues: Probable fructokinase-3 (345 aa).

Belongs to the carbohydrate kinase PfkB family.

The catalysed reaction is D-fructose + ATP = D-fructose 6-phosphate + ADP + H(+). The protein operates within glycan biosynthesis; starch biosynthesis. May play an important role in maintaining the flux of carbon towards starch formation. This chain is Probable fructokinase-3, found in Arabidopsis thaliana (Mouse-ear cress).